The following is a 1587-amino-acid chain: Mediator of RNA polymerase II transcription subunit 23 (1587 aa).

2 disordered regions span residues 1374 to 1484 (SQSE…QLQH) and 1567 to 1587 (QHQQ…QQPH). Residues 1385 to 1404 (PPEKEKSPEKEKEQEQEQHV) show a composition bias toward basic and acidic residues. The acidic stretch occupies residues 1387-1404 (EKEKSPEKEKEQEQEQHV). Positions 1410 to 1426 (LESTPSVSSLPQMQHHL) are enriched in polar residues. The segment covering 1430 to 1450 (PLLPSHQMMPPPQQHSSSLQH) has biased composition (low complexity). Positions 1463-1484 (DTSQHQTIQQQSNHPTQQQLQH) are enriched in polar residues. Positions 1567–1576 (QHQQYMQQQQ) are enriched in low complexity. The span at 1577–1587 (QHHHQHQQQPH) shows a compositional bias: basic residues.

This sequence belongs to the Mediator complex subunit 23 family. Component of the Mediator complex. Interacts with let-19/mdt-13.

It is found in the nucleus. Functionally, component of the Mediator complex, a coactivator involved in regulated gene transcription of nearly all RNA polymerase II-dependent genes. Mediator functions as a bridge to convey information from gene-specific regulatory proteins to the basal RNA polymerase II transcription machinery. Mediator is recruited to promoters by direct interactions with regulatory proteins and serves as a scaffold for the assembly of a functional pre-initiation complex with RNA polymerase II and the general transcription factors. Functions downstream of receptor let-23 and let-60/Ras during vulval induction likely by down-regulating the expression of phosphatase dep-1 and lin-12/Notch in vulva precursor cell descendants with a primary cell fate. Acts to repress beta-catenin target genes. Required for asymmetric division of T-cells. Plays a role in responses to M.nematophilum-mediated bacterial infection by promoting tail swelling and preventing constipation. In Caenorhabditis elegans, this protein is Mediator of RNA polymerase II transcription subunit 23 (sur-2).